The primary structure comprises 142 residues: Large ribosomal subunit protein uL13 (142 aa).

It belongs to the universal ribosomal protein uL13 family. Part of the 50S ribosomal subunit.

This protein is one of the early assembly proteins of the 50S ribosomal subunit, although it is not seen to bind rRNA by itself. It is important during the early stages of 50S assembly. In Dictyoglomus thermophilum (strain ATCC 35947 / DSM 3960 / H-6-12), this protein is Large ribosomal subunit protein uL13.